Here is a 367-residue protein sequence, read N- to C-terminus: Sigma54-dependent transcriptional regulator SfnR (367 aa).

Residues 21–250 (QVFEDPKSQA…LENVIHHTLL (230 aa)) enclose the Sigma-54 factor interaction domain. ATP-binding positions include 49 to 56 (GETGTGKE) and 112 to 121 (ADGGTLFLDE).

Functionally, involved in the dimethyl sulfide degradation pathway. Activates the expression of sfnG and sfnF. This chain is Sigma54-dependent transcriptional regulator SfnR, found in Pseudomonas fluorescens (strain Pf0-1).